The sequence spans 508 residues: Anthranilate synthase component 1 (508 aa).

Residues serine 51 and 283 to 285 (PYM) contribute to the L-tryptophan site. Residue 323–324 (GT) coordinates chorismate. A Mg(2+)-binding site is contributed by glutamate 350. Residues tyrosine 438, arginine 458, 477–479 (GAG), and glycine 479 contribute to the chorismate site. Residue glutamate 492 coordinates Mg(2+).

This sequence belongs to the anthranilate synthase component I family. Heterotetramer consisting of two non-identical subunits: a beta subunit (TrpG) and a large alpha subunit (TrpE). Requires Mg(2+) as cofactor.

The enzyme catalyses chorismate + L-glutamine = anthranilate + pyruvate + L-glutamate + H(+). The protein operates within amino-acid biosynthesis; L-tryptophan biosynthesis; L-tryptophan from chorismate: step 1/5. Its activity is regulated as follows. Feedback inhibited by tryptophan. Its function is as follows. Part of a heterotetrameric complex that catalyzes the two-step biosynthesis of anthranilate, an intermediate in the biosynthesis of L-tryptophan. In the first step, the glutamine-binding beta subunit (TrpG) of anthranilate synthase (AS) provides the glutamine amidotransferase activity which generates ammonia as a substrate that, along with chorismate, is used in the second step, catalyzed by the large alpha subunit of AS (TrpE) to produce anthranilate. In the absence of TrpG, TrpE can synthesize anthranilate directly from chorismate and high concentrations of ammonia. In Synechocystis sp. (strain ATCC 27184 / PCC 6803 / Kazusa), this protein is Anthranilate synthase component 1 (trpE).